Reading from the N-terminus, the 106-residue chain is V-type proton ATPase subunit G2 (106 aa).

Met1 carries the post-translational modification N-acetylmethionine. Positions 31–67 (LKQAKEEAETEVAEHKTSTEQGFQRKLEATSGDSGAN) are disordered. Residues 33 to 58 (QAKEEAETEVAEHKTSTEQGFQRKLE) show a composition bias toward basic and acidic residues.

Belongs to the V-ATPase G subunit family. As to quaternary structure, V-ATPase is a heteromultimeric enzyme composed of a peripheral catalytic V1 complex (components A to H) attached to an integral membrane V0 proton pore complex (components: a, c, c'', d and e).

It localises to the vacuole membrane. In terms of biological role, catalytic subunit of the peripheral V1 complex of vacuolar ATPase (V-ATPase). V-ATPase is responsible for acidifying a variety of intracellular compartments in eukaryotic cells. The polypeptide is V-type proton ATPase subunit G2 (VHA-G2) (Arabidopsis thaliana (Mouse-ear cress)).